The chain runs to 594 residues: UvrABC system protein C (594 aa).

The GIY-YIG domain occupies 14–91 (DSPGCYLHKD…IQENMPKYNI (78 aa)). The region spanning 196-231 (DKIIDDLRSKMLEASNKQEFERAAEYRDLISGIATM) is the UVR domain.

It belongs to the UvrC family. In terms of assembly, interacts with UvrB in an incision complex.

The protein resides in the cytoplasm. The UvrABC repair system catalyzes the recognition and processing of DNA lesions. UvrC both incises the 5' and 3' sides of the lesion. The N-terminal half is responsible for the 3' incision and the C-terminal half is responsible for the 5' incision. The protein is UvrABC system protein C of Streptococcus equi subsp. zooepidemicus (strain MGCS10565).